A 187-amino-acid chain; its full sequence is Ribosome-recycling factor (187 aa).

This sequence belongs to the RRF family.

It localises to the cytoplasm. Its function is as follows. Responsible for the release of ribosomes from messenger RNA at the termination of protein biosynthesis. May increase the efficiency of translation by recycling ribosomes from one round of translation to another. This Orientia tsutsugamushi (strain Boryong) (Rickettsia tsutsugamushi) protein is Ribosome-recycling factor.